The following is a 211-amino-acid chain: Uracil phosphoribosyltransferase (211 aa).

5-phospho-alpha-D-ribose 1-diphosphate contacts are provided by residues Arg-78, Arg-103, and 130–138 (DPMLATGGS). Residues Ile-193 and 198–200 (GDA) each bind uracil. Asp-199 lines the 5-phospho-alpha-D-ribose 1-diphosphate pocket.

This sequence belongs to the UPRTase family. It depends on Mg(2+) as a cofactor.

It catalyses the reaction UMP + diphosphate = 5-phospho-alpha-D-ribose 1-diphosphate + uracil. The protein operates within pyrimidine metabolism; UMP biosynthesis via salvage pathway; UMP from uracil: step 1/1. With respect to regulation, allosterically activated by GTP. Catalyzes the conversion of uracil and 5-phospho-alpha-D-ribose 1-diphosphate (PRPP) to UMP and diphosphate. The protein is Uracil phosphoribosyltransferase of Hahella chejuensis (strain KCTC 2396).